The sequence spans 461 residues: Zinc transporter 6 (461 aa).

The Cytoplasmic portion of the chain corresponds to 1 to 33 (MGTIHLFRKPQRSFFGKLLQEFRLVAADRRSWK). Residues 34–54 (ILLFGAINLTCTGFLLMWCSS) form a helical membrane-spanning segment. Topologically, residues 55 to 64 (TNSIALTAYT) are extracellular. A helical membrane pass occupies residues 65 to 85 (YLTIFDLFSLITCLVSYWVMM). Residues 86–98 (RKPSPAYSFGFER) are Cytoplasmic-facing. Residues 99–119 (LEVLAVFASTVLAQLGALFIL) traverse the membrane as a helical segment. At 120 to 134 (KESAERFLEQPEIHT) the chain is on the extracellular side. Residues 135-155 (GRLLVGTFVALSFNLFTMLSI) form a helical membrane-spanning segment. Residues 156–200 (RNKPFAYVSEAASTSWLQEHVADLSRSLCGIIPGLSSIFLPRMNP) lie on the Cytoplasmic side of the membrane. Residues 201–221 (FVLIDLAGAFALCITYMLIEI) traverse the membrane as a helical segment. Over 222 to 223 (NN) the chain is Extracellular. Residues 224–244 (YFAVDTASAIAIALMTFGTMY) traverse the membrane as a helical segment. The Cytoplasmic portion of the chain corresponds to 245–461 (PMSVYSGKVL…TNNRIGQPRP (217 aa)). A disordered region spans residues 362–393 (PPLKGTDDSNPVTSTPTKPSSPPPEFSFNTPG). The segment covering 370 to 379 (SNPVTSTPTK) has biased composition (low complexity).

Belongs to the cation diffusion facilitator (CDF) transporter (TC 2.A.4) family. SLC30A subfamily. In terms of assembly, heterodimer with SLC30A5; form a functional zinc ion transmembrane transporter.

The protein resides in the golgi apparatus. Its subcellular location is the trans-Golgi network membrane. In terms of biological role, has probably no intrinsic transporter activity but together with SLC30A5 forms a functional zinc ion:proton antiporter heterodimer, mediating zinc entry into the lumen of organelles along the secretory pathway. As part of that zinc ion:proton antiporter, contributes to zinc ion homeostasis within the early secretory pathway and regulates the activation and folding of enzymes like alkaline phosphatases and enzymes involved in phosphatidylinositol glycan anchor biosynthesis. The sequence is that of Zinc transporter 6 (SLC30A6) from Bos taurus (Bovine).